The primary structure comprises 556 residues: 2-succinyl-5-enolpyruvyl-6-hydroxy-3-cyclohexene-1-carboxylate synthase (556 aa).

Belongs to the TPP enzyme family. MenD subfamily. As to quaternary structure, homodimer. Mg(2+) serves as cofactor. Mn(2+) is required as a cofactor. It depends on thiamine diphosphate as a cofactor.

It carries out the reaction isochorismate + 2-oxoglutarate + H(+) = 5-enolpyruvoyl-6-hydroxy-2-succinyl-cyclohex-3-ene-1-carboxylate + CO2. The protein operates within quinol/quinone metabolism; 1,4-dihydroxy-2-naphthoate biosynthesis; 1,4-dihydroxy-2-naphthoate from chorismate: step 2/7. It participates in quinol/quinone metabolism; menaquinone biosynthesis. In terms of biological role, catalyzes the thiamine diphosphate-dependent decarboxylation of 2-oxoglutarate and the subsequent addition of the resulting succinic semialdehyde-thiamine pyrophosphate anion to isochorismate to yield 2-succinyl-5-enolpyruvyl-6-hydroxy-3-cyclohexene-1-carboxylate (SEPHCHC). In Staphylococcus haemolyticus (strain JCSC1435), this protein is 2-succinyl-5-enolpyruvyl-6-hydroxy-3-cyclohexene-1-carboxylate synthase.